The chain runs to 152 residues: Adenosine 5'-monophosphoramidase HNT1 (152 aa).

In terms of domain architecture, HIT spans 8-119 (IFCKIIKGEI…IPKKDEATGL (112 aa)). AMP contacts are provided by residues 33 to 34 (DI), Asn93, 99 to 101 (HQV), and 106 to 108 (HFH). The Histidine triad motif signature appears at 104–108 (HVHFH). The active-site Tele-AMP-histidine intermediate is the His106.

It belongs to the HINT family. Homodimer. Mg(2+) is required as a cofactor.

The enzyme catalyses adenosine 5'-phosphoramidate + H2O = AMP + NH4(+). Functionally, hydrolyzes adenosine 5'-monophosphoramidate substrates such as AMP-morpholidate, AMP-N-alanine methyl ester, AMP-alpha-acetyl lysine methyl ester and AMP-NH2. The polypeptide is Adenosine 5'-monophosphoramidase HNT1 (Candida albicans (strain SC5314 / ATCC MYA-2876) (Yeast)).